We begin with the raw amino-acid sequence, 485 residues long: Sulfate adenylyltransferase subunit 1 (485 aa).

Residues 30 to 243 (KGLLRFLTCG…ELLETIDTQR (214 aa)) enclose the tr-type G domain. The segment at 39-46 (GSVDDGKS) is G1. A GTP-binding site is contributed by 39–46 (GSVDDGKS). Positions 97-101 (GITID) are G2. The tract at residues 118–121 (DTPG) is G3. GTP contacts are provided by residues 118–122 (DTPGH) and 173–176 (NKMD). Residues 173–176 (NKMD) form a G4 region. Positions 210–212 (SAL) are G5.

Belongs to the TRAFAC class translation factor GTPase superfamily. Classic translation factor GTPase family. CysN/NodQ subfamily. In terms of assembly, heterodimer composed of CysD, the smaller subunit, and CysN.

It catalyses the reaction sulfate + ATP + H(+) = adenosine 5'-phosphosulfate + diphosphate. It participates in sulfur metabolism; hydrogen sulfide biosynthesis; sulfite from sulfate: step 1/3. Its function is as follows. With CysD forms the ATP sulfurylase (ATPS) that catalyzes the adenylation of sulfate producing adenosine 5'-phosphosulfate (APS) and diphosphate, the first enzymatic step in sulfur assimilation pathway. APS synthesis involves the formation of a high-energy phosphoric-sulfuric acid anhydride bond driven by GTP hydrolysis by CysN coupled to ATP hydrolysis by CysD. In Shewanella oneidensis (strain ATCC 700550 / JCM 31522 / CIP 106686 / LMG 19005 / NCIMB 14063 / MR-1), this protein is Sulfate adenylyltransferase subunit 1.